The sequence spans 376 residues: tRNA-specific 2-thiouridylase MnmA (376 aa).

ATP is bound by residues 14–21 (GMSGGVDS) and Met40. Positions 100–102 (NPD) are interaction with target base in tRNA. Cys105 serves as the catalytic Nucleophile. Cys105 and Cys202 are disulfide-bonded. Residue Gly129 coordinates ATP. The tract at residues 152–154 (KDQ) is interaction with tRNA. Residue Cys202 is the Cysteine persulfide intermediate of the active site. The segment at 315–316 (RY) is interaction with tRNA.

This sequence belongs to the MnmA/TRMU family.

Its subcellular location is the cytoplasm. The catalysed reaction is S-sulfanyl-L-cysteinyl-[protein] + uridine(34) in tRNA + AH2 + ATP = 2-thiouridine(34) in tRNA + L-cysteinyl-[protein] + A + AMP + diphosphate + H(+). In terms of biological role, catalyzes the 2-thiolation of uridine at the wobble position (U34) of tRNA, leading to the formation of s(2)U34. In Lactococcus lactis subsp. lactis (strain IL1403) (Streptococcus lactis), this protein is tRNA-specific 2-thiouridylase MnmA.